Reading from the N-terminus, the 316-residue chain is Tetrahydromethanopterin S-methyltransferase subunit H (316 aa).

Belongs to the MtrH family. As to quaternary structure, the complex is composed of 8 subunits; MtrA, MtrB, MtrC, MtrD, MtrE, MtrF, MtrG and MtrH.

It carries out the reaction 5-methyl-5,6,7,8-tetrahydromethanopterin + coenzyme M + 2 Na(+)(in) = 5,6,7,8-tetrahydromethanopterin + methyl-coenzyme M + 2 Na(+)(out). It participates in one-carbon metabolism; methanogenesis from CO(2); methyl-coenzyme M from 5,10-methylene-5,6,7,8-tetrahydromethanopterin: step 2/2. In terms of biological role, part of a complex that catalyzes the formation of methyl-coenzyme M and tetrahydromethanopterin from coenzyme M and methyl-tetrahydromethanopterin. This is an energy-conserving, sodium-ion translocating step. MtrH catalyzes the transfer of the methyl group from methyl-tetrahydromethanopterin to the corrinoid prosthetic group of MtrA. The sequence is that of Tetrahydromethanopterin S-methyltransferase subunit H (mtrH) from Methanosarcina mazei (strain ATCC BAA-159 / DSM 3647 / Goe1 / Go1 / JCM 11833 / OCM 88) (Methanosarcina frisia).